The sequence spans 804 residues: Ribonucleoside-diphosphate reductase large subunit (804 aa).

The region spanning 1–92 (MYVLNRKGEE…TDNLHKNTSD (92 aa)) is the ATP-cone domain. ATP contacts are provided by residues 5 to 6 (NR), 11 to 17 (EDISFDQ), Thr53, and Asp57. Ser216 serves as a coordination point for GDP. A disulfide bridge links Cys217 with Cys442. Residues 225 to 227 (DSI), Lys242, Arg255, and 262 to 263 (RG) each bind dTTP. Position 425 (Asn425) interacts with GDP. Asn425 acts as the Proton acceptor in catalysis. The active-site Cysteine radical intermediate is the Cys427. GDP contacts are provided by residues Glu429 and 603-606 (TAST). Glu429 acts as the Proton acceptor in catalysis.

The protein belongs to the ribonucleoside diphosphate reductase large chain family. As to quaternary structure, heterodimer of a large and a small subunit.

The enzyme catalyses a 2'-deoxyribonucleoside 5'-diphosphate + [thioredoxin]-disulfide + H2O = a ribonucleoside 5'-diphosphate + [thioredoxin]-dithiol. Under complex allosteric control mediated by deoxynucleoside triphosphates and ATP binding to separate specificity and activation sites on the large subunit. The type of nucleotide bound at the specificity site determines substrate preference. It seems probable that ATP makes the enzyme reduce CDP and UDP, dGTP favors ADP reduction and dTTP favors GDP reduction. Stimulated by ATP and inhibited by dATP binding to the activity site. In terms of biological role, provides the precursors necessary for DNA synthesis. Catalyzes the biosynthesis of deoxyribonucleotides from the corresponding ribonucleotides. This chain is Ribonucleoside-diphosphate reductase large subunit (RNR1), found in Plasmodium falciparum (isolate FCR-3 / Gambia).